The sequence spans 117 residues: Protein MGF 110-11L (117 aa).

Residues 3–23 (VFLGLLLGYSTILILTYQSPA) form a helical membrane-spanning segment. An N-linked (GlcNAc...) asparagine; by host glycan is attached at N62. The next 2 membrane-spanning stretches (helical) occupy residues 69–89 (YYCFYLVFSFAFAGCIAFAIC) and 94–114 (LCTTMKLLMLLSILVLLSQPI).

This sequence belongs to the asfivirus MGF 110 family.

The protein resides in the host membrane. Plays a role in virus cell tropism, and may be required for efficient virus replication in macrophages. This is Protein MGF 110-11L from African swine fever virus (isolate Warthog/Namibia/Wart80/1980) (ASFV).